The sequence spans 438 residues: Fumarate hydratase class II (438 aa).

Residues S76–T78, H101–D104, S111–N113, and T159 each bind substrate. The active-site Proton donor/acceptor is the H160. The active site involves S291. Substrate contacts are provided by residues S292 and K297 to N299.

The protein belongs to the class-II fumarase/aspartase family. Fumarase subfamily. Homotetramer.

It localises to the cytoplasm. The enzyme catalyses (S)-malate = fumarate + H2O. It participates in carbohydrate metabolism; tricarboxylic acid cycle; (S)-malate from fumarate: step 1/1. In terms of biological role, involved in the TCA cycle. Catalyzes the stereospecific interconversion of fumarate to L-malate. The polypeptide is Fumarate hydratase class II (Saccharolobus solfataricus (strain ATCC 35092 / DSM 1617 / JCM 11322 / P2) (Sulfolobus solfataricus)).